A 352-amino-acid chain; its full sequence is Histidinol-phosphate aminotransferase (352 aa).

Lys-216 bears the N6-(pyridoxal phosphate)lysine mark.

Belongs to the class-II pyridoxal-phosphate-dependent aminotransferase family. Histidinol-phosphate aminotransferase subfamily. The cofactor is pyridoxal 5'-phosphate.

The catalysed reaction is L-histidinol phosphate + 2-oxoglutarate = 3-(imidazol-4-yl)-2-oxopropyl phosphate + L-glutamate. It participates in amino-acid biosynthesis; L-histidine biosynthesis; L-histidine from 5-phospho-alpha-D-ribose 1-diphosphate: step 7/9. The protein is Histidinol-phosphate aminotransferase of Methanoculleus marisnigri (strain ATCC 35101 / DSM 1498 / JR1).